We begin with the raw amino-acid sequence, 1372 residues long: MLSFVDTRTLLLLAVTSCLATCQSLQMGSVRKGPTGDRGPRGQRGPAGPRGRDGVDGPVGPPGPPGAPGPPGPPGPPGLTGNFAAQYSDKGVSAGPGPMGLMGPRGPPGAVGAPGPQGFQGPAGEPGEPGQTGPAGSRGPAGPPGKAGEDGHPGKPGRPGERGVVGPQGARGFPGTPGLPGFKGIRGHNGLDGLKGQPGAQGVKGEPGAPGENGTPGQAGARGLPGERGRVGAPGPAGARGSDGSVGPVGPAGPIGSAGPPGFPGAPGPKGELGPVGNPGPAGPAGPRGEAGLPGLSGPVGPPGNPGANGLTGAKGATGLPGVAGAPGLPGPRGIPGPVGAAGATGPRGLVGEPGPAGSKGETGNKGEPGSAGAQGPPGPSGEEGKRGSPGEPGSAGPAGPPGLRGSPGSRGLPGADGRAGVMGPPGNRGSTGPAGVRGPNGDAGRPGEPGLMGPRGLPGSPGNVGPAGKEGPVGLPGIDGRPGPIGPAGPRGEAGNIGFPGPKGPSGDPGKPGEKGHPGLAGARGAPGPDGNNGAQGPPGPQGVQGGKGEQGPAGPPGFQGLPGPSGTAGEVGKPGERGLPGEFGLPGPAGPRGERGPPGESGAAGPSGPIGIRGPSGAPGPDGNKGEAGAVGAPGSAGASGPGGLPGERGAAGIPGGKGEKGETGLRGEIGNPGRDGARGAPGAIGAPGPAGASGDRGEAGAAGPSGPAGPRGSPGERGEVGPAGPNGFAGPAGSAGQPGAKGEKGTKGPKGENGIVGPTGPVGAAGPSGPNGPPGPAGSRGDGGPPGMTGFPGAAGRTGPPGPSGITGPPGPPGAAGKEGIRGPRGDQGPVGRTGEIGASGPPGFAGEKGPSGEPGTTGPPGTAGPQGLLGAPGILGLPGSRGERGQPGIAGALGEPGPLGIAGPPGARGPPGAVGSPGVNGAPGEAGRDGNPGSDGPPGRDGQPGHKGERGYPGNIGPTGAAGAPGPHGSVGPAGKHGNRGEPGPAGSVGPVGAVGPRGPSGPQGIRGDKGEPGDKGARGLPGLKGHNGLQGLPGLAGLHGDQGAPGPVGPAGPRGPAGPSGPIGKDGRSGHPGPVGPAGVRGSQGSQGPAGPPGPPGPPGPPGVSGGGYDFGFEGGFYRADQPRSQPSLRPKDYEVDATLKSLNNQIETLLTPEGSRKNPARTCRDLRLSHPEWKSDYYWIDPNQGCTMDAIKVYCDFSTGETCIQAQPVNTPAKNAYSRAQANKHVWLGETINGGSQFEYNAEGVSSKEMATQLAFMRLLANRASQNITYHCKNSIAYLDEETGRLNKAVILQGSNDVELVAEGNSRFTYTVLVDGCSKKTNEWDKTVIEYKTNKPSRLPFLDIAPLDIGGTNQEFRVEVGPVCFK.

Residues 1–22 (MLSFVDTRTLLLLAVTSCLATC) form the signal peptide. Q23 is modified (pyrrolidone carboxylic acid). Residues 23–85 (QSLQMGSVRK…PPGLTGNFAA (63 aa)) constitute a propeptide, N-terminal propeptide. Residues 28-1135 (GSVRKGPTGD…DQPRSQPSLR (1108 aa)) are disordered. Residues 59–77 (VGPPGPPGAPGPPGPPGPP) show a composition bias toward pro residues. Q86 is subject to Pyrrolidone carboxylic acid. K90 bears the Allysine mark. Residues 95-146 (GPGPMGLMGPRGPPGAVGAPGPQGFQGPAGEPGEPGQTGPAGSRGPAGPPGK) show a composition bias toward low complexity. Residues 147-161 (AGEDGHPGKPGRPGE) show a composition bias toward basic and acidic residues. Residue K183 is modified to 5-hydroxylysine; alternate. O-linked (Gal...) hydroxylysine; alternate glycosylation is present at K183. 7 stretches are compositionally biased toward low complexity: residues 231–260 (VGAP…SAGP), 285–299 (AGPR…LSGP), 306–327 (PGAN…AGAP), 336–348 (PGPV…TGPR), 390–416 (PGEP…LPGA), 476–495 (LPGI…RGEA), and 519–537 (PGLA…NGAQ). Over residues 544 to 553 (GVQGGKGEQG) the composition is skewed to gly residues. Positions 600–639 (PGESGAAGPSGPIGIRGPSGAPGPDGNKGEAGAVGAPGSA) are enriched in low complexity. Residues 640–649 (GASGPGGLPG) are compositionally biased toward gly residues. Low complexity-rich tracts occupy residues 674–716 (NPGR…PRGS) and 725–743 (PAGP…QPGA). Residues 744-753 (KGEKGTKGPK) show a composition bias toward basic and acidic residues. The span at 755–771 (ENGIVGPTGPVGAAGPS) shows a compositional bias: low complexity. The span at 781–790 (GSRGDGGPPG) shows a compositional bias: gly residues. The short motif at 783-785 (RGD) is the Cell attachment site element. The segment covering 792–801 (TGFPGAAGRT) has biased composition (low complexity). The Cell attachment site signature appears at 828 to 830 (RGD). 4 stretches are compositionally biased toward low complexity: residues 855-882 (SGEP…LGLP), 891-927 (PGIA…NGAP), 957-978 (PGNI…VGPA), and 987-1007 (PGPA…PSGP). The short motif at 1011-1013 (RGD) is the Cell attachment site element. A compositionally biased stretch (basic and acidic residues) spans 1011–1022 (RGDKGEPGDKGA). Pro residues predominate over residues 1095 to 1107 (AGPPGPPGPPGPP). Residues 1108–1120 (GVSGGGYDFGFEG) show a composition bias toward gly residues. A propeptide spans 1126–1372 (DQPRSQPSLR…RVEVGPVCFK (247 aa)) (C-terminal propeptide). In terms of domain architecture, Fibrillar collagen NC1 spans 1139-1372 (YEVDATLKSL…RVEVGPVCFK (234 aa)). Cystine bridges form between C1169/C1201, C1209/C1370, and C1278/C1323. Residues D1187, N1189, Q1190, C1192, and D1195 each coordinate Ca(2+). The N-linked (GlcNAc...) asparagine glycan is linked to N1273.

Belongs to the fibrillar collagen family. Trimers of one alpha 2(I) and two alpha 1(I) chains. Interacts (via C-terminus) with TMEM131 (via PapD-L domain); the interaction is direct and is involved in assembly and TRAPPIII ER-to-Golgi transport complex-dependent secretion of collagen. In terms of processing, proline residues at the third position of the tripeptide repeating unit (G-X-P) are hydroxylated in some or all of the chains. Proline residues at the second position of the tripeptide repeating unit (G-P-X) are hydroxylated in some of the chains. As to expression, forms the fibrils of tendon, ligaments and bones. In bones the fibrils are mineralized with calcium hydroxyapatite. Expressed in flagella of epididymal sperm.

It is found in the secreted. Its subcellular location is the extracellular space. The protein resides in the extracellular matrix. Its function is as follows. Type I collagen is a member of group I collagen (fibrillar forming collagen). The protein is Collagen alpha-2(I) chain (Col1a2) of Rattus norvegicus (Rat).